The primary structure comprises 244 residues: tRNA pseudouridine synthase A (244 aa).

Asp52 acts as the Nucleophile in catalysis. Tyr110 serves as a coordination point for substrate.

Belongs to the tRNA pseudouridine synthase TruA family. Homodimer.

It carries out the reaction uridine(38/39/40) in tRNA = pseudouridine(38/39/40) in tRNA. Functionally, formation of pseudouridine at positions 38, 39 and 40 in the anticodon stem and loop of transfer RNAs. This is tRNA pseudouridine synthase A from Clostridium kluyveri (strain ATCC 8527 / DSM 555 / NBRC 12016 / NCIMB 10680 / K1).